Reading from the N-terminus, the 303-residue chain is N-acetyl-D-glucosamine kinase (303 aa).

Residues 4 to 11 (GFDIGGTK) and 133 to 140 (GVGGGLIF) each bind ATP. Residues His-157, Cys-177, Cys-179, and Cys-184 each contribute to the Zn(2+) site.

The protein belongs to the ROK (NagC/XylR) family. NagK subfamily.

It carries out the reaction N-acetyl-D-glucosamine + ATP = N-acetyl-D-glucosamine 6-phosphate + ADP + H(+). It functions in the pathway cell wall biogenesis; peptidoglycan recycling. Functionally, catalyzes the phosphorylation of N-acetyl-D-glucosamine (GlcNAc) derived from cell-wall degradation, yielding GlcNAc-6-P. The chain is N-acetyl-D-glucosamine kinase from Escherichia coli O127:H6 (strain E2348/69 / EPEC).